The following is a 430-amino-acid chain: MFVDQVKISLKAGDGGNGITAYRREKYVPFGGPAGGDGGIGASVVFEVDEGLRTLLDFRYQRHFKAKKGENGQSSNMHGRNAEDLVLKVPPGTIIKSVESEEVLADLVEDGQRAIVARGGRGGRGNSRFATPRNPAPDFSENGEPGEELEVTLELKLLADVGLVGFPSVGKSTLLSIVSKAKPKIGAYHFTTIKPNLGVVSTPDHRSFVMADLPGLIEGASDGVGLGHQFLRHVERTKVIVHMIDMSGSEGRNPLDDYKIINQELINYKQRLEDRPQIIVANKMDLPDSQGNLSHFKEQLDNDVTVVPVSTITRDNIDQLLYQIADKLEEVKDVDFSVEEDENLGVNRVLYKHTPSADKFTISRDDDGAYVVSGNAIERMFKMTDFNSDPAVRRFARQMRSMGIDDALRERGCSNGDIVRILGGEFEFVE.

Residues 1 to 158 enclose the Obg domain; the sequence is MFVDQVKISL…LEVTLELKLL (158 aa). The interval 118–145 is disordered; sequence RGGRGGRGNSRFATPRNPAPDFSENGEP. Residues 159 to 329 form the OBG-type G domain; sequence ADVGLVGFPS…LLYQIADKLE (171 aa). Residues 165–172, 190–194, 212–215, 282–285, and 310–312 each bind GTP; these read GFPSVGKS, FTTIK, DLPG, NKMD, and STI. The Mg(2+) site is built by Ser172 and Thr192. Residues 352–430 enclose the OCT domain; sequence KHTPSADKFT…ILGGEFEFVE (79 aa).

It belongs to the TRAFAC class OBG-HflX-like GTPase superfamily. OBG GTPase family. In terms of assembly, monomer. The cofactor is Mg(2+).

Its subcellular location is the cytoplasm. An essential GTPase which binds GTP, GDP and possibly (p)ppGpp with moderate affinity, with high nucleotide exchange rates and a fairly low GTP hydrolysis rate. Plays a role in control of the cell cycle, stress response, ribosome biogenesis and in those bacteria that undergo differentiation, in morphogenesis control. The chain is GTPase Obg from Staphylococcus epidermidis (strain ATCC 35984 / DSM 28319 / BCRC 17069 / CCUG 31568 / BM 3577 / RP62A).